We begin with the raw amino-acid sequence, 310 residues long: D-alanine--D-alanine ligase (310 aa).

Residues 105–301 (KQAFVSAGIL…FEELVERIIL (197 aa)) enclose the ATP-grasp domain. 133–186 (SFGLPLVVKPVQEGSSVGISIVKEESQLAAAVKLAFRHDDEILVEQFIKGQEVQ) is an ATP binding site. 3 residues coordinate Mg(2+): aspartate 254, glutamate 267, and asparagine 269.

It belongs to the D-alanine--D-alanine ligase family. Mg(2+) serves as cofactor. It depends on Mn(2+) as a cofactor.

The protein localises to the cytoplasm. It catalyses the reaction 2 D-alanine + ATP = D-alanyl-D-alanine + ADP + phosphate + H(+). It functions in the pathway cell wall biogenesis; peptidoglycan biosynthesis. Cell wall formation. The protein is D-alanine--D-alanine ligase of Pelobacter propionicus (strain DSM 2379 / NBRC 103807 / OttBd1).